Reading from the N-terminus, the 129-residue chain is Large ribosomal subunit protein uL22 (129 aa).

This sequence belongs to the universal ribosomal protein uL22 family. In terms of assembly, part of the 50S ribosomal subunit.

This protein binds specifically to 23S rRNA; its binding is stimulated by other ribosomal proteins, e.g. L4, L17, and L20. It is important during the early stages of 50S assembly. It makes multiple contacts with different domains of the 23S rRNA in the assembled 50S subunit and ribosome. Its function is as follows. The globular domain of the protein is located near the polypeptide exit tunnel on the outside of the subunit, while an extended beta-hairpin is found that lines the wall of the exit tunnel in the center of the 70S ribosome. The chain is Large ribosomal subunit protein uL22 from Rhizobium etli (strain ATCC 51251 / DSM 11541 / JCM 21823 / NBRC 15573 / CFN 42).